We begin with the raw amino-acid sequence, 214 residues long: rRNA methyltransferase 2, mitochondrial (214 aa).

Residues 1–18 (MFSTKKSQGNLHKYIQRQ) constitute a mitochondrion transit peptide. Residues 63–66 (PGSW), D83, 100–101 (DI), and D125 each bind S-adenosyl-L-methionine. K169 (proton acceptor) is an active-site residue.

The protein belongs to the class I-like SAM-binding methyltransferase superfamily. RNA methyltransferase RlmE family.

The protein localises to the mitochondrion. It carries out the reaction a uridine in rRNA + S-adenosyl-L-methionine = a 2'-O-methyluridine in rRNA + S-adenosyl-L-homocysteine + H(+). In terms of biological role, S-adenosyl-L-methionine-dependent 2'-O-ribose methyltransferase that catalyzes the formation of 2'-O-methyluridine at position 808 (Um808) in the mitochondrial large subunit ribosomal RNA (mtLSU rRNA), a universally conserved modification in the peptidyl transferase domain of the mtLSU rRNA. This activity may require prior 2'-O-methylguanosine modification at position 809 (Gm809) by MRM3. Essential for late-stage assembly of mtLSU required for efficient translation of mitochondrial DNA encoded proteins; methyltransferase activity is not required for this function. Essential for mitochondrial respiratory function. The protein is rRNA methyltransferase 2, mitochondrial of Caenorhabditis elegans.